Reading from the N-terminus, the 161-residue chain is Disulfide bond formation protein B (161 aa).

The Cytoplasmic segment spans residues Met-1 to Tyr-8. Residues Phe-9–Tyr-25 form a helical membrane-spanning segment. Over Leu-26 to Phe-43 the chain is Periplasmic. Cysteines 35 and 38 form a disulfide. A helical transmembrane segment spans residues Ala-44–Ala-58. Topologically, residues Gln-59–Ser-63 are cytoplasmic. The helical transmembrane segment at Leu-64–Val-81 threads the bilayer. The Periplasmic portion of the chain corresponds to Tyr-82–Ala-136. Cysteines 94 and 122 form a disulfide. Residues Trp-137–Arg-155 traverse the membrane as a helical segment. The Cytoplasmic portion of the chain corresponds to Arg-156 to Arg-161.

Belongs to the DsbB family.

The protein localises to the cell inner membrane. Functionally, required for disulfide bond formation in some periplasmic proteins. Acts by oxidizing the DsbA protein. The chain is Disulfide bond formation protein B from Cupriavidus pinatubonensis (strain JMP 134 / LMG 1197) (Cupriavidus necator (strain JMP 134)).